Consider the following 153-residue polypeptide: 3-hydroxyacyl-[acyl-carrier-protein] dehydratase FabZ (153 aa).

His54 is a catalytic residue.

It belongs to the thioester dehydratase family. FabZ subfamily.

The protein resides in the cytoplasm. The enzyme catalyses a (3R)-hydroxyacyl-[ACP] = a (2E)-enoyl-[ACP] + H2O. Its function is as follows. Involved in unsaturated fatty acids biosynthesis. Catalyzes the dehydration of short chain beta-hydroxyacyl-ACPs and long chain saturated and unsaturated beta-hydroxyacyl-ACPs. This Chlamydia trachomatis serovar L2 (strain ATCC VR-902B / DSM 19102 / 434/Bu) protein is 3-hydroxyacyl-[acyl-carrier-protein] dehydratase FabZ.